We begin with the raw amino-acid sequence, 229 residues long: Ribonuclease 3 (229 aa).

Residues 7-132 (ISAFCDRIGH…VIAAVYRDAG (126 aa)) enclose the RNase III domain. Glutamate 45 contacts Mg(2+). Residue aspartate 49 is part of the active site. Positions 118 and 121 each coordinate Mg(2+). The active site involves glutamate 121. In terms of domain architecture, DRBM spans 157–226 (DPKTALQEWA…AKALLAQVES (70 aa)).

It belongs to the ribonuclease III family. In terms of assembly, homodimer. Mg(2+) serves as cofactor.

Its subcellular location is the cytoplasm. It carries out the reaction Endonucleolytic cleavage to 5'-phosphomonoester.. Its function is as follows. Digests double-stranded RNA. Involved in the processing of primary rRNA transcript to yield the immediate precursors to the large and small rRNAs (23S and 16S). Processes some mRNAs, and tRNAs when they are encoded in the rRNA operon. Processes pre-crRNA and tracrRNA of type II CRISPR loci if present in the organism. The protein is Ribonuclease 3 of Dinoroseobacter shibae (strain DSM 16493 / NCIMB 14021 / DFL 12).